A 231-amino-acid polypeptide reads, in one-letter code: ATP-dependent dethiobiotin synthetase BioD 2 (231 aa).

13–18 (SVGKTV) serves as a coordination point for ATP. T17 is a Mg(2+) binding site. The active site involves K38. ATP-binding positions include D55, 112–115 (EGTG), 172–173 (NR), 201–203 (PYL), and Q208. D55 and E112 together coordinate Mg(2+).

This sequence belongs to the dethiobiotin synthetase family. As to quaternary structure, homodimer. Mg(2+) serves as cofactor.

It localises to the cytoplasm. The enzyme catalyses (7R,8S)-7,8-diammoniononanoate + CO2 + ATP = (4R,5S)-dethiobiotin + ADP + phosphate + 3 H(+). Its pathway is cofactor biosynthesis; biotin biosynthesis; biotin from 7,8-diaminononanoate: step 1/2. Its function is as follows. Catalyzes a mechanistically unusual reaction, the ATP-dependent insertion of CO2 between the N7 and N8 nitrogen atoms of 7,8-diaminopelargonic acid (DAPA, also called 7,8-diammoniononanoate) to form a ureido ring. In Salmonella typhi, this protein is ATP-dependent dethiobiotin synthetase BioD 2.